The following is a 46-amino-acid chain: Large ribosomal subunit protein bL34 (46 aa).

This sequence belongs to the bacterial ribosomal protein bL34 family.

The polypeptide is Large ribosomal subunit protein bL34 (Trichodesmium erythraeum (strain IMS101)).